The following is a 252-amino-acid chain: MAAAVAGSLVDKLVCLWRQPYTRIYLPHLFFCISLVGSVLKNAELVPESYFSSSRNVLNLYFVKVSWGWTIVLLLPFIAYSNFYIKSHMFALRRLTSLLVATLVWYICTETFFYIEDITGSCYESNTMVVIRGEFDTKAACRKAGFFWDGFDISGHSFILSYSSLVIMEEMVPMLHIQPAYRNPPLDCLYLALNVIVAIWIWMFGCTSVYFHDIIDKILGTSCGILGWYMTYKVWYVKLFSPGLPPQPKQHT.

The Cytoplasmic portion of the chain corresponds to methionine 1–tyrosine 25. Residues leucine 26–valine 46 form a helical membrane-spanning segment. Residues proline 47–asparagine 59 are Lumenal-facing. A helical membrane pass occupies residues leucine 60–tyrosine 80. The Cytoplasmic portion of the chain corresponds to serine 81–arginine 94. Residues leucine 95–isoleucine 115 traverse the membrane as a helical segment. Residues glutamate 116–histidine 156 are Lumenal-facing. Residue histidine 156 is part of the active site. Residues serine 157–isoleucine 177 form a helical membrane-spanning segment. At glutamine 178 to tyrosine 190 the chain is on the cytoplasmic side. Residues leucine 191 to phenylalanine 211 form a helical membrane-spanning segment. Residue histidine 212 is part of the active site. At histidine 212 to cysteine 223 the chain is on the lumenal side. A helical membrane pass occupies residues glycine 224–leucine 244. Residues proline 245 to threonine 252 are Cytoplasmic-facing.

It belongs to the FIT family. FIT2 subfamily. As to expression, widely expressed.

It is found in the endoplasmic reticulum membrane. It carries out the reaction an acyl-CoA + H2O = an acyl-4'-phosphopantetheine + adenosine 3',5'-bisphosphate + 2 H(+). In terms of biological role, fatty acyl-coenzyme A (CoA) diphosphatase that hydrolyzes fatty acyl-CoA to yield acyl-4'-phosphopantetheine and adenosine 3',5'-bisphosphate. Preferentially hydrolyzes unsaturated long-chain acyl-CoA substrates in the endoplasmic reticulum (ER) lumen. This catalytic activity is required for maintaining ER structure and for lipid droplets (LDs) biogenesis, which are lipid storage organelles involved in maintaining lipid and energy homeostasis. Required for lipid droplet accumulation in liver and intestine during embryogenesis. May directly bind to diacylglycerol (DAGs) and triacylglycerol, which is also important for LD biogenesis. May support directional budding of nacent LDs from the ER into the cytosol by reducing DAG levels at sites of LD formation. May play a role in the regulation of cell morphology, ER morphology and cytoskeletal organization. The polypeptide is Acyl-coenzyme A diphosphatase FITM2 (Danio rerio (Zebrafish)).